A 545-amino-acid polypeptide reads, in one-letter code: Protein BTN1 (545 aa).

The interval 23–49 (AHSSASDPRRTMVTNTSESPLASRQAT) is disordered. Residues 34-49 (MVTNTSESPLASRQAT) are compositionally biased toward polar residues. Helical transmembrane passes span 66–86 (AFFLFGLLNNSLYVVILTAAL), 97–117 (LVSFANIFPALIAKAIWPYFL), 127–147 (VWSCAALSFIGMLLVSFFPAL), 205–225 (VGWFASGTGAAGLIGAAAWWV), and 234–254 (GMAILSVLPAFMIMAYAIILP). The segment at 276-304 (TEDDAVERSSSDDQPTTANDDRQDSTIHI) is disordered. 3 helical membrane-spanning segments follow: residues 322–342 (MALLKPMLQPYIIPLVIVYAM), 408–428 (LLWLPAVLQTGLLAVLLTESL), and 440–460 (LVIVLICVEGLAGGSAYVSVF).

Belongs to the battenin family.

It is found in the vacuole membrane. Involved in vacuolar transport and vacuole pH homeostasis. Also required for cytokinesis. The sequence is that of Protein BTN1 (BTN1) from Mycosarcoma maydis (Corn smut fungus).